A 132-amino-acid chain; its full sequence is uncharacterized protein (132 aa).

4 helical membrane-spanning segments follow: residues F15–Y37, A49–F71, V81–V103, and L110–V129.

It localises to the cell membrane. This is an uncharacterized protein from Archaeoglobus fulgidus (strain ATCC 49558 / DSM 4304 / JCM 9628 / NBRC 100126 / VC-16).